A 286-amino-acid chain; its full sequence is Ribosomal RNA small subunit methyltransferase I (286 aa).

This sequence belongs to the methyltransferase superfamily. RsmI family.

Its subcellular location is the cytoplasm. It carries out the reaction cytidine(1402) in 16S rRNA + S-adenosyl-L-methionine = 2'-O-methylcytidine(1402) in 16S rRNA + S-adenosyl-L-homocysteine + H(+). Catalyzes the 2'-O-methylation of the ribose of cytidine 1402 (C1402) in 16S rRNA. The protein is Ribosomal RNA small subunit methyltransferase I of Escherichia coli O157:H7.